The primary structure comprises 931 residues: MSHPKLESSSNKEIITEEVGLLKQLLDEATQKLIGSESFDKIEKIVSLSLTDDYTGLKETISALSNEEMVIVSRYFSILPLLINISEDVDLAYEINYKNNLNQDYLGKLSTTIDVVAGHENAKDILEHVNVVPVLTAHPTQVQRKTVLELTSKIHDLLRKYRDVKAGIVNQEKWYADLRRYIGIIMQTDTIREKKLKVKNEITNVMEYYNRSLIKAVTKLTAEYKALAAKKGIHLENPKPLTMGMWIGGDRDGNPFVTAETLRLSAMVQSEVIINHYIEQLNELYRNMSLSINLTEVSPELVTLANQSQDNSVYRENEPYRKAFNFIQDKLVQTLLNLKVGSSPKEKFVSRQESSDIVGRYIKSHIAQVASDIQTEELPAYATAEEFKQDLLLVKQSLVQYGQDSLVDGELACLIQAVDIFGFYLATIDMRQDSSINEACVAELLKSANIVDDYSSLSEEEKCQLLLKELTEDPRTLSSTHAPKSELLQKELAIFQTARELKDQLGEDIINQHIISHTESVSDMFELAIMLKEVGLIDANQARIQIVPLFETIEDLDNSRDIMTQYLHYELVKKWIATNNNYQEIMLGYSDSNKDGGYLSSGWTLYKAQNELTKIGEENGIKITFFHGRGGTVGRGGGPSYEAITSQPFGSIKDRIRLTEQGEIIENKYGNQDAAYYNLEMLISASIDRMVTRMITNPNEIDNFRETMDGIVSESNAVYRNLVFDNPYFYDYFFEASPIKEVSSLNIGSRPAARKTITEISGLRAIPWVFSWSQNRIMFPGWYGVGSAFKHFIEQDEANLAKLQTMYQKWPFFNSLLSNVDMVLSKSNMNIALQYAQLAGSKEVRDVFNIILNEWQLTKDMILAIEQHDNLLEENPMLHASLDYRLPYFNVLNYVQIELIKRLRSNQLDEDYEKLIHITINGIATGLRNSG.

Active-site residues include histidine 138 and lysine 594.

This sequence belongs to the PEPCase type 1 family. The cofactor is Mg(2+).

The catalysed reaction is oxaloacetate + phosphate = phosphoenolpyruvate + hydrogencarbonate. Forms oxaloacetate, a four-carbon dicarboxylic acid source for the tricarboxylic acid cycle. The chain is Phosphoenolpyruvate carboxylase from Streptococcus agalactiae serotype III (strain NEM316).